The sequence spans 366 residues: tRNA N6-adenosine threonylcarbamoyltransferase (366 aa).

H130, H134, and Y151 together coordinate a divalent metal cation. Substrate contacts are provided by residues 151–155 (YVSGG), D183, G198, E202, and N297. An a divalent metal cation-binding site is contributed by D325.

Belongs to the KAE1 / TsaD family. In terms of assembly, component of the EKC/KEOPS complex composed of at least BUD32, CGI121, GON7, KAE1 and PCC1; the whole complex dimerizes. Requires a divalent metal cation as cofactor.

It is found in the cytoplasm. The protein resides in the nucleus. It carries out the reaction L-threonylcarbamoyladenylate + adenosine(37) in tRNA = N(6)-L-threonylcarbamoyladenosine(37) in tRNA + AMP + H(+). In terms of biological role, component of the EKC/KEOPS complex that is required for the formation of a threonylcarbamoyl group on adenosine at position 37 (t(6)A37) in tRNAs that read codons beginning with adenine. The complex is probably involved in the transfer of the threonylcarbamoyl moiety of threonylcarbamoyl-AMP (TC-AMP) to the N6 group of A37. KAE1 likely plays a direct catalytic role in this reaction, but requires other protein(s) of the complex to fulfill this activity. The EKC/KEOPS complex also promotes both telomere uncapping and telomere elongation. The complex is required for efficient recruitment of transcriptional coactivators. The polypeptide is tRNA N6-adenosine threonylcarbamoyltransferase (Cryptococcus neoformans var. neoformans serotype D (strain JEC21 / ATCC MYA-565) (Filobasidiella neoformans)).